Here is an 817-residue protein sequence, read N- to C-terminus: Transcription factor yanR (817 aa).

The zn(2)-C6 fungal-type DNA-binding region spans 19–46 (CIVCRRRKVRCGREHPECANCVRMKENC). 3 disordered regions span residues 102 to 161 (GNVL…PQVD), 180 to 218 (HHASSRAGTSRTSSVSQDASPAVSESARAPSTSTSYSGL), and 733 to 775 (SLSS…VADS). Positions 113–127 (LPRPTISPASAPPPQ) are enriched in pro residues. Over residues 146 to 158 (SSTILTPAPSSHP) the composition is skewed to polar residues. Low complexity predominate over residues 184–195 (SRAGTSRTSSVS). Polar residues-rich tracts occupy residues 208-217 (APSTSTSYSG) and 748-760 (EAPSTTTAPQMPS).

The protein localises to the nucleus. In terms of biological role, transcription factor that regulates the expression of the gene cluster that mediates the biosynthesis of yanuthone D, a fungal isoprenoid epoxycyclohexenone that acts as an antibiotic against fungi and bacteria. This chain is Transcription factor yanR, found in Aspergillus niger (strain ATCC 1015 / CBS 113.46 / FGSC A1144 / LSHB Ac4 / NCTC 3858a / NRRL 328 / USDA 3528.7).